The chain runs to 172 residues: Protein-export protein SecB (172 aa).

The interval 152–172 is disordered; it reads AQGAEGGNSGIVMPDGSQARH.

This sequence belongs to the SecB family. In terms of assembly, homotetramer, a dimer of dimers. One homotetramer interacts with 1 SecA dimer.

The protein localises to the cytoplasm. Functionally, one of the proteins required for the normal export of preproteins out of the cell cytoplasm. It is a molecular chaperone that binds to a subset of precursor proteins, maintaining them in a translocation-competent state. It also specifically binds to its receptor SecA. The polypeptide is Protein-export protein SecB (Cupriavidus taiwanensis (strain DSM 17343 / BCRC 17206 / CCUG 44338 / CIP 107171 / LMG 19424 / R1) (Ralstonia taiwanensis (strain LMG 19424))).